The following is a 244-amino-acid chain: Nodulation protein G (244 aa).

11–35 lines the NAD(+) pocket; sequence VTGASGAIGGAIARVLHAQGAIVGL. Residue S139 participates in substrate binding. The active-site Proton acceptor is the Y152.

Belongs to the short-chain dehydrogenases/reductases (SDR) family.

Proposed to modify Nod factor fatty acyl chain. The protein is Nodulation protein G (nodG) of Rhizobium meliloti (Ensifer meliloti).